The primary structure comprises 380 residues: Tryptophan 2,3-dioxygenase (380 aa).

Substrate-binding positions include 57-61 (FIITH) and Arg-128. A heme-binding site is contributed by His-313. Thr-328 contributes to the substrate binding site.

This sequence belongs to the tryptophan 2,3-dioxygenase family. As to quaternary structure, homotetramer. Dimer of dimers. The cofactor is heme.

The catalysed reaction is L-tryptophan + O2 = N-formyl-L-kynurenine. Its pathway is amino-acid degradation; L-tryptophan degradation via kynurenine pathway; L-kynurenine from L-tryptophan: step 1/2. It functions in the pathway pigment biosynthesis; ommochrome biosynthesis. Functionally, heme-dependent dioxygenase that catalyzes the oxidative cleavage of the L-tryptophan (L-Trp) pyrrole ring and converts L-tryptophan to N-formyl-L-kynurenine. Catalyzes the oxidative cleavage of the indole moiety. The chain is Tryptophan 2,3-dioxygenase from Drosophila willistoni (Fruit fly).